Consider the following 406-residue polypeptide: Phosphopentomutase (406 aa).

Asp10, Asp305, His310, Asp346, His347, and His358 together coordinate Mn(2+).

It belongs to the phosphopentomutase family. Mn(2+) serves as cofactor.

The protein resides in the cytoplasm. It carries out the reaction 2-deoxy-alpha-D-ribose 1-phosphate = 2-deoxy-D-ribose 5-phosphate. It catalyses the reaction alpha-D-ribose 1-phosphate = D-ribose 5-phosphate. The protein operates within carbohydrate degradation; 2-deoxy-D-ribose 1-phosphate degradation; D-glyceraldehyde 3-phosphate and acetaldehyde from 2-deoxy-alpha-D-ribose 1-phosphate: step 1/2. Isomerase that catalyzes the conversion of deoxy-ribose 1-phosphate (dRib-1-P) and ribose 1-phosphate (Rib-1-P) to deoxy-ribose 5-phosphate (dRib-5-P) and ribose 5-phosphate (Rib-5-P), respectively. The protein is Phosphopentomutase of Rhizobium rhizogenes (strain K84 / ATCC BAA-868) (Agrobacterium radiobacter).